A 302-amino-acid polypeptide reads, in one-letter code: Large ribosomal subunit protein uL3c (302 aa).

Residues 1–36 constitute a chloroplast transit peptide; sequence MFQSSRLVALGLCAALVLVGGSIILSGLSPNLSSPM. A disordered region spans residues 208–239; sequence FQGSIRRWGMKRGPMSHGSKSHRQHGSIGCSA.

It belongs to the universal ribosomal protein uL3 family. As to quaternary structure, part of the 50S ribosomal subunit.

It is found in the plastid. Its subcellular location is the chloroplast. In terms of biological role, one of the primary rRNA binding proteins, it binds directly near the 3'-end of the 23S rRNA, where it nucleates assembly of the 50S subunit. This Bigelowiella natans (Pedinomonas minutissima) protein is Large ribosomal subunit protein uL3c (RPL3).